The primary structure comprises 125 residues: Glycine cleavage system H protein (125 aa).

Residues 19 to 101 enclose the Lipoyl-binding domain; it reads GAVVGITDFA…NGSGWFFKLT (83 aa). Lysine 60 carries the post-translational modification N6-lipoyllysine.

Belongs to the GcvH family. The glycine cleavage system is composed of four proteins: P, T, L and H. (R)-lipoate serves as cofactor.

Functionally, the glycine cleavage system catalyzes the degradation of glycine. The H protein shuttles the methylamine group of glycine from the P protein to the T protein. This chain is Glycine cleavage system H protein, found in Methylocella silvestris (strain DSM 15510 / CIP 108128 / LMG 27833 / NCIMB 13906 / BL2).